A 258-amino-acid chain; its full sequence is Small ribosomal subunit protein uS2 (258 aa).

The protein belongs to the universal ribosomal protein uS2 family.

In Streptococcus suis (strain 98HAH33), this protein is Small ribosomal subunit protein uS2.